The sequence spans 858 residues: DNA mismatch repair protein MutS (858 aa).

Position 613–620 (613–620 (GPNMAGKS)) interacts with ATP.

The protein belongs to the DNA mismatch repair MutS family.

Functionally, this protein is involved in the repair of mismatches in DNA. It is possible that it carries out the mismatch recognition step. This protein has a weak ATPase activity. The protein is DNA mismatch repair protein MutS of Dehalococcoides mccartyi (strain ATCC BAA-2100 / JCM 16839 / KCTC 5957 / BAV1).